Consider the following 143-residue polypeptide: Large ribosomal subunit protein uL11 (143 aa).

It belongs to the universal ribosomal protein uL11 family. As to quaternary structure, part of the ribosomal stalk of the 50S ribosomal subunit. Interacts with L10 and the large rRNA to form the base of the stalk. L10 forms an elongated spine to which L12 dimers bind in a sequential fashion forming a multimeric L10(L12)X complex. One or more lysine residues are methylated.

Functionally, forms part of the ribosomal stalk which helps the ribosome interact with GTP-bound translation factors. This is Large ribosomal subunit protein uL11 from Cupriavidus pinatubonensis (strain JMP 134 / LMG 1197) (Cupriavidus necator (strain JMP 134)).